The primary structure comprises 549 residues: Glucose-6-phosphate isomerase (549 aa).

Glu-355 acts as the Proton donor in catalysis. Residues His-387 and Lys-515 contribute to the active site.

Belongs to the GPI family.

The protein localises to the cytoplasm. The enzyme catalyses alpha-D-glucose 6-phosphate = beta-D-fructose 6-phosphate. Its pathway is carbohydrate biosynthesis; gluconeogenesis. It functions in the pathway carbohydrate degradation; glycolysis; D-glyceraldehyde 3-phosphate and glycerone phosphate from D-glucose: step 2/4. Catalyzes the reversible isomerization of glucose-6-phosphate to fructose-6-phosphate. In Mannheimia succiniciproducens (strain KCTC 0769BP / MBEL55E), this protein is Glucose-6-phosphate isomerase.